A 176-amino-acid chain; its full sequence is Probable chorismate pyruvate-lyase (176 aa).

3 residues coordinate substrate: Arg-70, Leu-108, and Glu-166.

It belongs to the UbiC family.

It localises to the cytoplasm. The catalysed reaction is chorismate = 4-hydroxybenzoate + pyruvate. It functions in the pathway cofactor biosynthesis; ubiquinone biosynthesis. Functionally, removes the pyruvyl group from chorismate, with concomitant aromatization of the ring, to provide 4-hydroxybenzoate (4HB) for the ubiquinone pathway. The protein is Probable chorismate pyruvate-lyase of Dechloromonas aromatica (strain RCB).